The primary structure comprises 273 residues: Dermonecrotic toxin LvSicTox-alphaIC1ai (273 aa).

Residue H5 is part of the active site. 2 residues coordinate Mg(2+): E25 and D27. H41 (nucleophile) is an active-site residue. 2 cysteine pairs are disulfide-bonded: C45–C51 and C47–C190. Residue D85 coordinates Mg(2+).

Belongs to the arthropod phospholipase D family. Class II subfamily. Requires Mg(2+) as cofactor. As to expression, expressed by the venom gland.

The protein localises to the secreted. It carries out the reaction an N-(acyl)-sphingosylphosphocholine = an N-(acyl)-sphingosyl-1,3-cyclic phosphate + choline. The enzyme catalyses an N-(acyl)-sphingosylphosphoethanolamine = an N-(acyl)-sphingosyl-1,3-cyclic phosphate + ethanolamine. It catalyses the reaction a 1-acyl-sn-glycero-3-phosphocholine = a 1-acyl-sn-glycero-2,3-cyclic phosphate + choline. The catalysed reaction is a 1-acyl-sn-glycero-3-phosphoethanolamine = a 1-acyl-sn-glycero-2,3-cyclic phosphate + ethanolamine. Dermonecrotic toxins cleave the phosphodiester linkage between the phosphate and headgroup of certain phospholipids (sphingolipid and lysolipid substrates), forming an alcohol (often choline) and a cyclic phosphate. This toxin acts on sphingomyelin (SM). It may also act on ceramide phosphoethanolamine (CPE), lysophosphatidylcholine (LPC) and lysophosphatidylethanolamine (LPE), but not on lysophosphatidylserine (LPS), and lysophosphatidylglycerol (LPG). It acts by transphosphatidylation, releasing exclusively cyclic phosphate products as second products. Induces dermonecrosis, hemolysis, increased vascular permeability, edema, inflammatory response, and platelet aggregation. In Loxosceles variegata (Recluse spider), this protein is Dermonecrotic toxin LvSicTox-alphaIC1ai.